The primary structure comprises 293 residues: MAISMTGFGRGEYKDDNYYFLVECKTINHKYSDINIRLPRKISFLEDKVRNLVKNYVKRGRVDLYIKFDLLGKEDVNLNFDEGLASQYIDILKEIKNKFDIIDDISVMNVAKFPDIVKIEEKEEDEDLLWSMLNQAVEDALIKLREMRSEEGKKLAEDIAMRCDLLKNHIEEIEKYSSSVVEDYREKLNLRISELLDDPSIIDENRLAQEVAIYADKSSITEEIVRFKSHIGQLKNTIFKDDSIGRKIDFLIQEMNRETNTIGSKSSDINITNLVVEVKSELEKIREQIQNIE.

It belongs to the YicC/YloC family. A divalent metal cation is required as a cofactor.

Its function is as follows. Negatively modulates sporulation, probably in response to nutrient conditions. Effects expression of sporulation regulator spo0A in an indirect manner, possibly via repression of the sinRR' operon. In terms of biological role, probably a ssRNA endonuclease. Functionally, might contribute to small RNA (sRNA) regulation. This chain is Probable endoribonuclease YicC, found in Clostridioides difficile (strain 630) (Peptoclostridium difficile).